The following is a 203-amino-acid chain: Thymidylate kinase (203 aa).

14-21 provides a ligand contact to ATP; sequence GGEGIGKS.

Belongs to the thymidylate kinase family.

The catalysed reaction is dTMP + ATP = dTDP + ADP. In terms of biological role, phosphorylation of dTMP to form dTDP in both de novo and salvage pathways of dTTP synthesis. This is Thymidylate kinase from Rickettsia rickettsii (strain Iowa).